The sequence spans 677 residues: DNA ligase (677 aa).

NAD(+)-binding positions include 38–42 (DYDFD), 87–88 (SL), and E121. K123 acts as the N6-AMP-lysine intermediate in catalysis. Positions 144, 187, 300, and 324 each coordinate NAD(+). The Zn(2+) site is built by C418, C421, C436, and C442. Residues 601 to 677 (LINSNFEGLS…ISEEEFEAML (77 aa)) form the BRCT domain.

It belongs to the NAD-dependent DNA ligase family. LigA subfamily. Requires Mg(2+) as cofactor. Mn(2+) serves as cofactor.

The catalysed reaction is NAD(+) + (deoxyribonucleotide)n-3'-hydroxyl + 5'-phospho-(deoxyribonucleotide)m = (deoxyribonucleotide)n+m + AMP + beta-nicotinamide D-nucleotide.. DNA ligase that catalyzes the formation of phosphodiester linkages between 5'-phosphoryl and 3'-hydroxyl groups in double-stranded DNA using NAD as a coenzyme and as the energy source for the reaction. It is essential for DNA replication and repair of damaged DNA. This Chlorobium luteolum (strain DSM 273 / BCRC 81028 / 2530) (Pelodictyon luteolum) protein is DNA ligase.